The sequence spans 148 residues: Nucleoside diphosphate kinase (148 aa).

6 residues coordinate ATP: Lys-9, Phe-57, Arg-85, Thr-91, Arg-102, and Asn-112. Thr-91 is subject to Phosphothreonine. The active-site Pros-phosphohistidine intermediate is the His-115. Ser-122 carries the post-translational modification Phosphoserine.

Belongs to the NDK family. As to quaternary structure, homotetramer. The cofactor is Mg(2+).

It is found in the cytoplasm. The catalysed reaction is a 2'-deoxyribonucleoside 5'-diphosphate + ATP = a 2'-deoxyribonucleoside 5'-triphosphate + ADP. It catalyses the reaction a ribonucleoside 5'-diphosphate + ATP = a ribonucleoside 5'-triphosphate + ADP. In terms of biological role, major role in the synthesis of nucleoside triphosphates other than ATP. The ATP gamma phosphate is transferred to the NDP beta phosphate via a ping-pong mechanism, using a phosphorylated active-site intermediate. This is Nucleoside diphosphate kinase from Bacillus cereus (strain ATCC 14579 / DSM 31 / CCUG 7414 / JCM 2152 / NBRC 15305 / NCIMB 9373 / NCTC 2599 / NRRL B-3711).